We begin with the raw amino-acid sequence, 565 residues long: Formate--tetrahydrofolate ligase (565 aa).

Residue 65–72 (TPAGEGKT) participates in ATP binding.

Belongs to the formate--tetrahydrofolate ligase family.

It carries out the reaction (6S)-5,6,7,8-tetrahydrofolate + formate + ATP = (6R)-10-formyltetrahydrofolate + ADP + phosphate. It participates in one-carbon metabolism; tetrahydrofolate interconversion. The polypeptide is Formate--tetrahydrofolate ligase (Syntrophus aciditrophicus (strain SB)).